We begin with the raw amino-acid sequence, 132 residues long: ATP synthase epsilon chain (132 aa).

The protein belongs to the ATPase epsilon chain family. F-type ATPases have 2 components, CF(1) - the catalytic core - and CF(0) - the membrane proton channel. CF(1) has five subunits: alpha(3), beta(3), gamma(1), delta(1), epsilon(1). CF(0) has three main subunits: a, b and c.

It localises to the cell inner membrane. Produces ATP from ADP in the presence of a proton gradient across the membrane. This chain is ATP synthase epsilon chain, found in Anaeromyxobacter dehalogenans (strain 2CP-C).